The following is a 265-amino-acid chain: NAD-capped RNA hydrolase NudC (265 aa).

Arginine 76 contacts substrate. Zn(2+) contacts are provided by cysteine 106, cysteine 109, cysteine 124, and cysteine 127. Tyrosine 132 is a binding site for substrate. The Nudix hydrolase domain occupies 133–256; it reads PRISPAMMVL…SIAHRLIRHA (124 aa). Residues alanine 166, glutamate 182, and glutamate 186 each coordinate a divalent metal cation. The Nudix box motif lies at 167 to 188; it reads GFVEPGETLEECVHRETWEEVG. 200–207 contacts substrate; it reads QSWPFPHS. Glutamate 227 lines the a divalent metal cation pocket. Alanine 249 is a binding site for substrate.

This sequence belongs to the Nudix hydrolase family. NudC subfamily. In terms of assembly, homodimer. Mg(2+) serves as cofactor. The cofactor is Mn(2+). Requires Zn(2+) as cofactor.

It catalyses the reaction a 5'-end NAD(+)-phospho-ribonucleoside in mRNA + H2O = a 5'-end phospho-adenosine-phospho-ribonucleoside in mRNA + beta-nicotinamide D-ribonucleotide + 2 H(+). The enzyme catalyses NAD(+) + H2O = beta-nicotinamide D-ribonucleotide + AMP + 2 H(+). It carries out the reaction NADH + H2O = reduced beta-nicotinamide D-ribonucleotide + AMP + 2 H(+). Its function is as follows. mRNA decapping enzyme that specifically removes the nicotinamide adenine dinucleotide (NAD) cap from a subset of mRNAs by hydrolyzing the diphosphate linkage to produce nicotinamide mononucleotide (NMN) and 5' monophosphate mRNA. The NAD-cap is present at the 5'-end of some mRNAs and stabilizes RNA against 5'-processing. Has preference for mRNAs with a 5'-end purine. Catalyzes the hydrolysis of a broad range of dinucleotide pyrophosphates. This is NAD-capped RNA hydrolase NudC from Chromobacterium violaceum (strain ATCC 12472 / DSM 30191 / JCM 1249 / CCUG 213 / NBRC 12614 / NCIMB 9131 / NCTC 9757 / MK).